The following is a 233-amino-acid chain: Small ribosomal subunit protein uS7m (233 aa).

A mitochondrion-targeting transit peptide spans 1–28; it reads MAAPTAAGLCPRLRAWLPRLTQVRWSRY.

It belongs to the universal ribosomal protein uS7 family. In terms of assembly, component of the mitochondrial ribosome small subunit (28S) which comprises a 12S rRNA and about 30 distinct proteins.

The protein localises to the mitochondrion. The sequence is that of Small ribosomal subunit protein uS7m (MRPS7) from Gallus gallus (Chicken).